We begin with the raw amino-acid sequence, 428 residues long: MENPYEIVAVIAREILDSRGNPTVEVDVHTPISMGRAAVPSGASTGTHEAVELRDGGKRYHGKGVRRAVENVNKIIAPELVGMDVRWQREIDRLLIELDGTENKSNLGANAILAVSLAVAKAAANALELPLYQYLGGVNAYVLPVPLSNVINGGVHAGNDLDFQEFMIMPIGANSFREAIRWVSETYHVLKKVIAEKYGKNAVNVGDEGGFAPPMKEVTEPLDVLIKAIEEAGYKPGEEIALALDAASSEFYKDGKYIVSGKEYTREELLELYKELTSTYPIVSIEDPFHEEDWEGFVMITRELGKKVQIVGDDLFVTNPKRLKKGIEMGAANALLLKVNQIGTLTEAMDAAYMAFRAGYGVVVSHRSGETEDATIADLAVALNAGQIKTGAPARSDRNAKYNQLIRIEEELEGVAVYAGKNFRKVFF.

Glutamine 164 is a binding site for (2R)-2-phosphoglycerate. The active-site Proton donor is glutamate 208. Positions 245, 286, and 313 each coordinate Mg(2+). (2R)-2-phosphoglycerate contacts are provided by lysine 338, arginine 367, serine 368, and lysine 389. The active-site Proton acceptor is lysine 338.

The protein belongs to the enolase family. The cofactor is Mg(2+).

It is found in the cytoplasm. It localises to the secreted. The protein localises to the cell surface. It carries out the reaction (2R)-2-phosphoglycerate = phosphoenolpyruvate + H2O. Its pathway is carbohydrate degradation; glycolysis; pyruvate from D-glyceraldehyde 3-phosphate: step 4/5. Catalyzes the reversible conversion of 2-phosphoglycerate (2-PG) into phosphoenolpyruvate (PEP). It is essential for the degradation of carbohydrates via glycolysis. The chain is Enolase from Pyrococcus abyssi (strain GE5 / Orsay).